The sequence spans 1014 residues: Regulator of telomere elongation helicase 1 homolog (1014 aa).

The Helicase ATP-binding domain occupies 7 to 308; that stretch reads RGVDVDFPYD…NSADKQFDPE (302 aa). 42 to 49 is an ATP binding site; sequence SPTGTGKT. Over residues 70 to 85 the composition is skewed to gly residues; the sequence is GGGGGGGGGGGGGGGS. The disordered stretch occupies residues 70 to 106; sequence GGGGGGGGGGGGGGGSQQPPYGSQPSGSQHSGGSASQ. Positions 86 to 106 are enriched in low complexity; sequence QQPPYGSQPSGSQHSGGSASQ. Residues Cys-149, Cys-170, Cys-175, and Cys-211 each contribute to the [4Fe-4S] cluster site. Positions 255-258 match the DEAH box motif; it reads DEAH. A disordered region spans residues 906 to 930; it reads SSKKSNITHAPGNSGAIHEKSGGQE.

It belongs to the helicase family. RAD3/XPD subfamily.

The protein resides in the nucleus. The catalysed reaction is ATP + H2O = ADP + phosphate + H(+). Its function is as follows. A probable ATP-dependent DNA helicase implicated in DNA replication, DNA repair and the maintenance of genomic stability. Acts as an anti-recombinase to counteract toxic recombination and limit crossover during meiosis. Regulates meiotic recombination and crossover homeostasis by physically dissociating strand invasion events and thereby promotes noncrossover repair by meiotic synthesis dependent strand annealing (SDSA) as well as disassembly of D loop recombination intermediates. The sequence is that of Regulator of telomere elongation helicase 1 homolog from Oryza sativa subsp. japonica (Rice).